Reading from the N-terminus, the 135-residue chain is MNFSMHLVLAVAAAACLCVVTAAPEGRLTRTKQQRPTRGFKNVEMMTARGFGKRDRPHTRAELYGLDNFWEMLEAAPEREGQESTDEKTLESIPLDWFVNEMLNNPDFARSVVRKFIDLNQDGMLSSEELLRNVA.

Positions 1 to 22 (MNFSMHLVLAVAAAACLCVVTA) are cleaved as a signal peptide. A Phenylalanine amide modification is found at Phe51. The propeptide occupies 55 to 135 (DRPHTRAELY…SSEELLRNVA (81 aa)).

Allatotropin: Expressed in corpora cardiaca (CC), corpora allata (CA), antennal lobe (AL) and gnathal ganglion (GNG) (protein level). Expression in AL detected in all animals, expression in GNG detected in most animals and expression in CA and CC detected in few animals (at protein level). Allatotropin-PP-1: Expressed in corpora cardiaca (CC), corpora allata (CA), antennal lobe (AL) and gnathal ganglion (GNG) (at protein level). Expression in AL detected in all animals and expression in GNG, CA and CC detected in some animals (at protein level).

Its subcellular location is the secreted. Functionally, neuropeptide stimulator of juvenile hormone synthesis. The protein is Allatotropins of Agrotis ipsilon (Black cutworm moth).